A 364-amino-acid polypeptide reads, in one-letter code: Mannose-1-phosphate guanyltransferase (364 aa).

Belongs to the transferase hexapeptide repeat family.

It localises to the cytoplasm. It carries out the reaction alpha-D-mannose 1-phosphate + GTP + H(+) = GDP-alpha-D-mannose + diphosphate. Its pathway is nucleotide-sugar biosynthesis; GDP-alpha-D-mannose biosynthesis; GDP-alpha-D-mannose from alpha-D-mannose 1-phosphate (GTP route): step 1/1. Functionally, involved in cell wall synthesis where it is required for glycosylation. Involved in cell cycle progression through cell-size checkpoint. The sequence is that of Mannose-1-phosphate guanyltransferase (mpg1) from Emericella nidulans (strain FGSC A4 / ATCC 38163 / CBS 112.46 / NRRL 194 / M139) (Aspergillus nidulans).